We begin with the raw amino-acid sequence, 173 residues long: Calcineurin subunit B (173 aa).

EF-hand domains follow at residues 20–55 (DEIDRLRKRFMKLDTDASGILETNEFLSLPGVAANP), 59–87 (RLMDVFDENHSGDVDFQEFINGLSTFSTK), 89–124 (NKKEKLRFAFKVYDIDRDGYISNGELFIVLKMMVGN), and 130–165 (QLQQIVDKTIMEADKDGDGKISFEEFEAQVGGTNVY). The Ca(2+) site is built by Asp-33, Asp-35, Ser-37, Glu-44, Asp-65, Asn-67, Ser-69, Asp-71, Glu-76, Asp-102, Asp-104, Asp-106, Tyr-108, Glu-113, Asp-143, Asp-145, Asp-147, Lys-149, and Glu-154.

The protein belongs to the calcineurin regulatory subunit family. As to quaternary structure, composed of a catalytic subunit (A) and a regulatory subunit (B).

Its function is as follows. Regulatory subunit of calcineurin, a calcium-dependent, calmodulin stimulated protein phosphatase. Confers calcium sensitivity. This chain is Calcineurin subunit B (CNB1), found in Yarrowia lipolytica (strain CLIB 122 / E 150) (Yeast).